A 78-amino-acid chain; its full sequence is Lantibiotic cinnamycin (78 aa).

Residues 1 to 59 (MTASILQQSVVDADFRAALLENPAAFGASAAALPTPVEAQDQASLDFWTKDIAATEAFA) constitute a propeptide that is removed on maturation. Cross-links (beta-methyllanthionine (Cys-Thr)) lie at residues 60–77 (CRQSCSFGPFTFVCDGNT) and 64–70 (CSFGPFT). A cross-link (lanthionine (Ser-Cys)) is located at residues 63-73 (SCSFGPFTFVC). A cross-link (lysinoalanine (Ser-Lys)) is located at residues 65 to 78 (SFGPFTFVCDGNTK). Asp74 is subject to (3R)-3-hydroxyaspartate.

This sequence belongs to the type B lantibiotic family. In terms of processing, maturation of lantibiotics involves the enzymatic conversion of Thr, and Ser into dehydrated AA and the formation of thioether bonds with cysteine or the formation of dialkylamine bonds with lysine. This is followed by membrane translocation and cleavage of the modified precursor.

Can act as inhibitor of the enzyme phospholipase A2, and of the angiotensin-converting enzyme. Shows inhibitory activities against herpes simplex virus and immunopotentiating activities. Its antimicrobial activities are not very pronounced. The polypeptide is Lantibiotic cinnamycin (cinA) (Streptomyces griseoverticillatus (Streptoverticillium griseoverticillatum)).